Here is a 131-residue protein sequence, read N- to C-terminus: Large ribosomal subunit protein bL17 (131 aa).

The protein belongs to the bacterial ribosomal protein bL17 family. In terms of assembly, part of the 50S ribosomal subunit. Contacts protein L32.

In Polynucleobacter necessarius subsp. necessarius (strain STIR1), this protein is Large ribosomal subunit protein bL17.